The chain runs to 129 residues: Fluoride-specific ion channel FluC 1 (129 aa).

A run of 4 helical transmembrane segments spans residues 9–29, 33–53, 62–82, and 98–118; these read LSVG…NLIW, GTLT…YFFV, LVTG…SFNL, and IYFF…MLVG. Residues Gly72 and Thr75 each coordinate Na(+).

This sequence belongs to the fluoride channel Fluc/FEX (TC 1.A.43) family.

The protein resides in the cell membrane. The catalysed reaction is fluoride(in) = fluoride(out). With respect to regulation, na(+) is not transported, but it plays an essential structural role and its presence is essential for fluoride channel function. Its function is as follows. Fluoride-specific ion channel. Important for reducing fluoride concentration in the cell, thus reducing its toxicity. The chain is Fluoride-specific ion channel FluC 1 from Lactobacillus johnsonii (strain CNCM I-12250 / La1 / NCC 533).